We begin with the raw amino-acid sequence, 139 residues long: Ribonuclease homolog (139 aa).

Positions 1-23 are cleaved as a signal peptide; sequence MAMSSLWWTAILLLALTVSMCYG. The active-site Proton acceptor is His34. 3 disulfides stabilise this stretch: Cys49–Cys102, Cys64–Cys111, and Cys82–Cys126. Substrate is bound at residue 65–69; sequence KSFNT. The active-site Proton donor is His133.

This sequence belongs to the pancreatic ribonuclease family.

The protein resides in the secreted. The polypeptide is Ribonuclease homolog (Gallus gallus (Chicken)).